Consider the following 320-residue polypeptide: Prophage side tail fiber protein homolog StfQ (320 aa).

2 disordered regions span residues 147–213 (SGRA…HKSS) and 241–270 (TTSGSGQTRNAGKTSSDGAHTHSLSGTAAS). 2 stretches are compositionally biased toward polar residues: residues 172 to 206 (DLGTETTSSFDYGTKSTNNTGAHTHSISGTANSAG) and 241 to 258 (TTSGSGQTRNAGKTSSDG). The span at 261–270 (THSLSGTAAS) shows a compositional bias: low complexity.

It belongs to the tail fiber family.

This chain is Prophage side tail fiber protein homolog StfQ (stfQ), found in Escherichia coli (strain K12).